We begin with the raw amino-acid sequence, 256 residues long: 2-aminoethanethiol dioxygenase (256 aa).

Fe cation contacts are provided by histidine 100, histidine 102, and histidine 179.

Monomer. The cofactor is Fe cation. As to expression, ubiquitous, with highest expression in brain, heart and skeletal muscle (at protein level).

The enzyme catalyses cysteamine + O2 = hypotaurine + H(+). The catalysed reaction is N-terminal L-cysteinyl-[protein] + O2 = N-terminal S-hydroxy-S-oxy-L-cysteinyl-[protein] + H(+). Plays a vital role in regulating thiol metabolism and preserving oxygen homeostasis by oxidizing the sulfur of cysteamine and N-terminal cysteine-containing proteins to their corresponding sulfinic acids using O2 as a cosubstrate. Catalyzes the oxidation of cysteamine (2-aminoethanethiol) to hypotaurine. Catalyzes the oxidation of the regulator of G-protein signaling 5 (RGS5). Also oxidizes proteins RGS4 and interleukin-32 (IL32). The chain is 2-aminoethanethiol dioxygenase (Ado) from Mus musculus (Mouse).